The primary structure comprises 89 residues: Small ribosomal subunit protein uS15 (89 aa).

Belongs to the universal ribosomal protein uS15 family. Part of the 30S ribosomal subunit. Forms a bridge to the 50S subunit in the 70S ribosome, contacting the 23S rRNA.

Its function is as follows. One of the primary rRNA binding proteins, it binds directly to 16S rRNA where it helps nucleate assembly of the platform of the 30S subunit by binding and bridging several RNA helices of the 16S rRNA. In terms of biological role, forms an intersubunit bridge (bridge B4) with the 23S rRNA of the 50S subunit in the ribosome. This is Small ribosomal subunit protein uS15 from Orientia tsutsugamushi (strain Ikeda) (Rickettsia tsutsugamushi).